The sequence spans 230 residues: uncharacterized protein (230 aa).

A helical transmembrane segment spans residues 17-37 (AGALSLGIGFFALASALWFLI). An N-linked (GlcNAc...) asparagine glycan is attached at Asn-126.

The protein localises to the membrane. This is an uncharacterized protein from Mus musculus (Mouse).